The chain runs to 479 residues: Sulfate adenylyltransferase subunit 1 (479 aa).

In terms of domain architecture, tr-type G spans 25–239; the sequence is KSLLRFLTCG…EVLETVDIQR (215 aa). A G1 region spans residues 34-41; sequence GSVDDGKS. 34–41 lines the GTP pocket; sequence GSVDDGKS. Residues 92–96 form a G2 region; the sequence is GITID. The segment at 113–116 is G3; that stretch reads DTPG. GTP-binding positions include 113–117 and 168–171; these read DTPGH and NKMD. Positions 168–171 are G4; that stretch reads NKMD. Residues 206–208 are G5; sequence SAL.

This sequence belongs to the TRAFAC class translation factor GTPase superfamily. Classic translation factor GTPase family. CysN/NodQ subfamily. Heterodimer composed of CysD, the smaller subunit, and CysN.

The catalysed reaction is sulfate + ATP + H(+) = adenosine 5'-phosphosulfate + diphosphate. It functions in the pathway sulfur metabolism; hydrogen sulfide biosynthesis; sulfite from sulfate: step 1/3. Its function is as follows. With CysD forms the ATP sulfurylase (ATPS) that catalyzes the adenylation of sulfate producing adenosine 5'-phosphosulfate (APS) and diphosphate, the first enzymatic step in sulfur assimilation pathway. APS synthesis involves the formation of a high-energy phosphoric-sulfuric acid anhydride bond driven by GTP hydrolysis by CysN coupled to ATP hydrolysis by CysD. The polypeptide is Sulfate adenylyltransferase subunit 1 (Salmonella paratyphi A (strain ATCC 9150 / SARB42)).